A 218-amino-acid polypeptide reads, in one-letter code: DNA endonuclease I-CeuI (218 aa).

Residues Gly-65 and Glu-66 each coordinate Mg(2+). An interaction with DNA region spans residues 71 to 75; that stretch reads ISTKK. Asp-86 is a binding site for Mg(2+). Interaction with DNA regions lie at residues 90–94, 114–116, and 191–199; these read NVTQH, RHK, and KQQGQSNEG.

Belongs to the LAGLIDADG endonuclease family. As to quaternary structure, homodimer. Mg(2+) serves as cofactor.

It is found in the plastid. The protein resides in the chloroplast. Functionally, endonuclease involved in intron homing. Recognizes a degenerate sequence of 17-19 bp to produce a staggered cut 5 bp downstream from the CeLSU.5 intron insertion site. This is DNA endonuclease I-CeuI from Chlamydomonas moewusii (Chlamydomonas eugametos).